Consider the following 456-residue polypeptide: Exodeoxyribonuclease 7 large subunit (456 aa).

Belongs to the XseA family. In terms of assembly, heterooligomer composed of large and small subunits.

It localises to the cytoplasm. It carries out the reaction Exonucleolytic cleavage in either 5'- to 3'- or 3'- to 5'-direction to yield nucleoside 5'-phosphates.. Functionally, bidirectionally degrades single-stranded DNA into large acid-insoluble oligonucleotides, which are then degraded further into small acid-soluble oligonucleotides. The polypeptide is Exodeoxyribonuclease 7 large subunit (Shigella flexneri serotype 5b (strain 8401)).